The chain runs to 309 residues: MGLRFPTATQRQIVFRRLFDSGNNDDYDEAAVVAVLGWVHRFEVVVRIAGLLLFQISTAVAVLGSFSLVFPTATLKSRPGFPCHVVWAPEVLLLVPVASALFVYFRYERPVLAQRNRHPRCRRPFRQLVLLLAGLLAHIPALGVTCACQEPREVLTSFVLTLVITLLCAEVVFICRDNCTLSDQFALINGVWVVVFLANVLIVFTRPWTWPLRLLLGFYSTVGLIFAGHFSQQVLFVRHVLMPRDVAHTSLQLFITFISLFFLILRIRNCQDLLSDLRLLELPSSDAMTLTPNDLSHASSSTPLSTLSP.

7 consecutive transmembrane segments (helical) span residues 50 to 70 (GLLL…SLVF), 85 to 105 (VVWA…FVYF), 128 to 148 (LVLL…TCAC), 154 to 174 (VLTS…VVFI), 185 to 205 (FALI…IVFT), 210 to 230 (WPLR…AGHF), and 245 to 265 (DVAH…FLIL).

Belongs to the cytomegalovirus US12 family.

It localises to the host membrane. The protein localises to the host cytoplasm. This Human cytomegalovirus (strain Merlin) (HHV-5) protein is Protein US16 (US16).